The following is a 699-amino-acid chain: Chitinase A1 (699 aa).

An N-terminal signal peptide occupies residues 1–41 (MINLNKHTAFKKTAKFFLGLSLLLSVIVPSFALQPATAEAA). One can recognise a GH18 domain in the interval 44–454 (YKIVGYYPSW…NKLKADLPTG (411 aa)). Chitin contacts are provided by residues 135–136 (DQ) and 162–165 (GGWT). Glutamate 204 (proton donor) is an active-site residue. Residues tyrosine 205, 277–280 (MTYD), and tryptophan 433 each bind chitin. The segment at 449 to 471 (ADLPTGGTVPPVDTTAPSVPGNA) is disordered. Residues 452–465 (PTGGTVPPVDTTAP) show a composition bias toward low complexity. 2 Fibronectin type-III domains span residues 467–553 (VPGN…TAQP) and 562–647 (APTN…TAAE).

It belongs to the glycosyl hydrolase 18 family. Chitinase class II subfamily.

It carries out the reaction Random endo-hydrolysis of N-acetyl-beta-D-glucosaminide (1-&gt;4)-beta-linkages in chitin and chitodextrins.. The sequence is that of Chitinase A1 (chiA1) from Niallia circulans (Bacillus circulans).